The sequence spans 478 residues: Aspartyl/glutamyl-tRNA(Asn/Gln) amidotransferase subunit B (478 aa).

Belongs to the GatB/GatE family. GatB subfamily. As to quaternary structure, heterotrimer of A, B and C subunits.

The catalysed reaction is L-glutamyl-tRNA(Gln) + L-glutamine + ATP + H2O = L-glutaminyl-tRNA(Gln) + L-glutamate + ADP + phosphate + H(+). It carries out the reaction L-aspartyl-tRNA(Asn) + L-glutamine + ATP + H2O = L-asparaginyl-tRNA(Asn) + L-glutamate + ADP + phosphate + 2 H(+). In terms of biological role, allows the formation of correctly charged Asn-tRNA(Asn) or Gln-tRNA(Gln) through the transamidation of misacylated Asp-tRNA(Asn) or Glu-tRNA(Gln) in organisms which lack either or both of asparaginyl-tRNA or glutaminyl-tRNA synthetases. The reaction takes place in the presence of glutamine and ATP through an activated phospho-Asp-tRNA(Asn) or phospho-Glu-tRNA(Gln). This chain is Aspartyl/glutamyl-tRNA(Asn/Gln) amidotransferase subunit B, found in Brevibacillus brevis (strain 47 / JCM 6285 / NBRC 100599).